Here is an 89-residue protein sequence, read N- to C-terminus: Small ribosomal subunit protein uS15 (89 aa).

This sequence belongs to the universal ribosomal protein uS15 family. Part of the 30S ribosomal subunit. Forms a bridge to the 50S subunit in the 70S ribosome, contacting the 23S rRNA.

Its function is as follows. One of the primary rRNA binding proteins, it binds directly to 16S rRNA where it helps nucleate assembly of the platform of the 30S subunit by binding and bridging several RNA helices of the 16S rRNA. Functionally, forms an intersubunit bridge (bridge B4) with the 23S rRNA of the 50S subunit in the ribosome. The polypeptide is Small ribosomal subunit protein uS15 (Bradyrhizobium sp. (strain ORS 278)).